Here is a 209-residue protein sequence, read N- to C-terminus: Putative AgrB-like protein (209 aa).

The next 5 membrane-spanning stretches (helical) occupy residues 49–71 (ILFLVSYYFGLIKETIIMLAAFG), 82–102 (AKNSIVCTVMSLLMFVLGAYL), 105–125 (YLLFNNYMVLASFIIVNLLLF), 149–169 (QAVLMGMLLMAITLIIPDELI), and 173–193 (ISLSSYFEIISILPITYKVLG).

It belongs to the AgrB family.

It is found in the cell membrane. Its function is as follows. May be involved in the proteolytic processing of a quorum sensing system signal molecule precursor. The sequence is that of Putative AgrB-like protein from Clostridium acetobutylicum (strain ATCC 824 / DSM 792 / JCM 1419 / IAM 19013 / LMG 5710 / NBRC 13948 / NRRL B-527 / VKM B-1787 / 2291 / W).